Consider the following 270-residue polypeptide: Phosphatidylglycerol--prolipoprotein diacylglyceryl transferase (270 aa).

4 helical membrane passes run 19-39, 56-76, 92-112, and 116-136; these read FPVY…LWLA, LVLI…VIFE, QGGL…VLFA, and GVSF…GQAI. Arginine 138 lines the a 1,2-diacyl-sn-glycero-3-phospho-(1'-sn-glycerol) pocket. The next 3 helical transmembrane spans lie at 178-198, 206-226, and 236-256; these read HPTF…LLAL, GELF…VEGL, and LRIA…FIIV.

It belongs to the Lgt family.

The protein resides in the cell membrane. The enzyme catalyses L-cysteinyl-[prolipoprotein] + a 1,2-diacyl-sn-glycero-3-phospho-(1'-sn-glycerol) = an S-1,2-diacyl-sn-glyceryl-L-cysteinyl-[prolipoprotein] + sn-glycerol 1-phosphate + H(+). It participates in protein modification; lipoprotein biosynthesis (diacylglyceryl transfer). Catalyzes the transfer of the diacylglyceryl group from phosphatidylglycerol to the sulfhydryl group of the N-terminal cysteine of a prolipoprotein, the first step in the formation of mature lipoproteins. The polypeptide is Phosphatidylglycerol--prolipoprotein diacylglyceryl transferase (Bacillus cereus (strain B4264)).